Consider the following 656-residue polypeptide: MKVLCVAEKNSIAKAVSQILGGGRSTSRDSGYMYVKNYDFMFSGFPFARNGANCEVTMTSVAGHLTGIDFSHDSHGWGKCAIQELFDAPLNEIMNNNQKKIASNIKREARNADYLMIWTDCDREGEYIGWEIWQEAKRGNRLIQNDQVYRAVFSHLERQHILNAARNPSRLDMKSVHAVGTRIEIDLRAGVTFTRLLTETLRNKLRNQATMTKDGAKHRGGNKNDSQVVSYGTCQFPTLGFVVDRFERIRNFVPEEFWYIQLVVENKDNGGTTTFQWDRGHLFDRLSVLTFYETCIETAGNVAQVVDLKSKPTTKYRPLPLTTVELQKNCARYLRLNAKQSLDAAEKLYQKGFISYPRTETDTFPHAMDLKSLVEKQAQLDQLAAGGRTAWASYAASLLQPENTSNNNKFKFPRSGSHDDKAHPPIHPIVSLGPEANVSPVERRVYEYVARHFLACCSEDAKGQSMTLVLDWAVERFSASGLVVLERNFLDVYPWARWETTKQLPRLEMNALVDIAKAEMKAGTTAPPKPMTESELILLMDTNGIGTDATIAEHIDKIQVRNYVRSEKVGKETYLQPTTLGVSLVHGFEAIGLEDSFAKPFQRREMEQDLKKICEGHASKTDVVKDIVEKYRKYWHKTNACKNTLLQVYDRVKASM.

In terms of domain architecture, Toprim spans 2 to 156 (KVLCVAEKNS…QVYRAVFSHL (155 aa)). Residues 172-635 (DMKSVHAVGT…DIVEKYRKYW (464 aa)) form the Topo IA-type catalytic domain. Tyr356 functions as the O-(5'-phospho-DNA)-tyrosine intermediate in the catalytic mechanism.

The protein belongs to the type IA topoisomerase family. As to quaternary structure, forms a complex with SGS1 and RMI1. Interacts with SGS1.

The enzyme catalyses ATP-independent breakage of single-stranded DNA, followed by passage and rejoining.. Functionally, releases the supercoiling and torsional tension of DNA introduced during the DNA replication and transcription by transiently cleaving and rejoining one strand of the DNA duplex. Introduces a single-strand break via transesterification at a target site in duplex DNA. The scissile phosphodiester is attacked by the catalytic tyrosine of the enzyme, resulting in the formation of a DNA-(5'-phosphotyrosyl)-enzyme intermediate and the expulsion of a 3'-OH DNA strand. The free DNA strand than undergoes passage around the unbroken strand thus removing DNA supercoils. Finally, in the religation step, the DNA 3'-OH attacks the covalent intermediate to expel the active-site tyrosine and restore the DNA phosphodiester backbone. Essential for proper chromosome segregation in both meiosis and mitosis. Weakly relaxes negative supercoils and displays a distinct preference for binding single-stranded DNA. The TOP3-SGS1 protein complex may function as a eukaryotic reverse gyrase introducing positive supercoils into extrachromosomal ribosomal DNA rings. This is DNA topoisomerase 3 (TOP3) from Saccharomyces cerevisiae (strain ATCC 204508 / S288c) (Baker's yeast).